The primary structure comprises 384 residues: Glucose-fructose oxidoreductase domain-containing protein 2 (384 aa).

The N-terminal stretch at 1 to 25 (MKTLPGIGVFGTGNTARVLISLLRA) is a signal peptide. The tract at residues 358–384 (GEWESVELTNDETDSNQNLSEVIQHNL) is disordered. The segment covering 372–384 (SNQNLSEVIQHNL) has biased composition (polar residues).

Belongs to the Gfo/Idh/MocA family.

It is found in the secreted. The protein resides in the extracellular space. It localises to the extracellular matrix. Functionally, promotes matrix assembly. The polypeptide is Glucose-fructose oxidoreductase domain-containing protein 2 (gfod2) (Xenopus tropicalis (Western clawed frog)).